Here is a 1026-residue protein sequence, read N- to C-terminus: Unconventional myosin-Ic (1026 aa).

Met-1 bears the N-acetylmethionine mark. Residues 12 to 695 enclose the Myosin motor domain; the sequence is GVQDFLLLEN…TLFITEDALE (684 aa). ATP is bound by residues Asn-53, Tyr-61, 104 to 113, and 157 to 161; these read SGESGAGKTE and NDNSS. The residue at position 349 (Lys-349) is an N6-methyllysine. An actin-binding region spans residues 572–594; sequence LAKLMDILMSKEPSYVRCIKPND. 2 consecutive IQ domains span residues 698–727 and 721–750; these read KQTI…AVIV and IRHA…AADT. One can recognise a TH1 domain in the interval 849–1024; sequence KDGYSRSVPK…NGHLSVTTPR (176 aa).

The protein belongs to the TRAFAC class myosin-kinesin ATPase superfamily. Myosin family. In terms of assembly, interacts (via its IQ motifs) with calm.

The protein resides in the cytoplasm. It localises to the cell cortex. Its subcellular location is the cell projection. It is found in the ruffle membrane. The protein localises to the cytoplasmic vesicle. The protein resides in the stereocilium membrane. Myosins are actin-based motor molecules with ATPase activity. Unconventional myosins serve in intracellular movements. Their highly divergent tails are presumed to bind to membranous compartments, which would be moved relative to actin filaments. The chain is Unconventional myosin-Ic (myo1c) from Danio rerio (Zebrafish).